Consider the following 188-residue polypeptide: GTPase KRas (188 aa).

Residues 10 to 18 (GAGGVGKSA), 29 to 35 (VDEYDPT), 59 to 60 (AG), and 116 to 119 (NKCD) contribute to the GTP site. The Effector region motif lies at 32-40 (YDPTIEDSY). The segment at 168–188 (EKMSKDGKKKKKKTKTKCIIM) is disordered. Cys185 is modified (cysteine methyl ester). Cys185 carries the S-farnesyl cysteine lipid modification. Residues 186–188 (IIM) constitute a propeptide, removed in mature form.

Belongs to the small GTPase superfamily. Ras family.

The protein resides in the cell membrane. Its subcellular location is the cytoplasm. The enzyme catalyses GTP + H2O = GDP + phosphate + H(+). Its activity is regulated as follows. Alternates between an inactive form bound to GDP and an active form bound to GTP. Activated by a guanine nucleotide-exchange factor (GEF) and inactivated by a GTPase-activating protein (GAP). Ras proteins bind GDP/GTP and possess intrinsic GTPase activity. Plays an important role in the regulation of cell proliferation. May play a role in promoting oncogenic events by inducing transcriptional silencing of tumor suppressor genes (TSGs). This Meleagris gallopavo (Wild turkey) protein is GTPase KRas (KRAS).